Consider the following 179-residue polypeptide: Exosome complex component Csl4 (179 aa).

The S1 motif domain maps to 58-137 (GDVVLGRVVD…RLSTKEEEMG (80 aa)). Positions 143, 146, 159, and 162 each coordinate Zn(2+).

Belongs to the CSL4 family. As to quaternary structure, component of the archaeal exosome complex. Forms a trimer of Rrp4 and/or Csl4 subunits. The trimer associates with a hexameric ring-like arrangement composed of 3 Rrp41-Rrp42 heterodimers. Interacts with DnaG.

The protein localises to the cytoplasm. In terms of biological role, non-catalytic component of the exosome, which is a complex involved in RNA degradation. Increases the RNA binding and the efficiency of RNA degradation. Helpful for the interaction of the exosome with A-poor RNAs. This is Exosome complex component Csl4 from Archaeoglobus fulgidus (strain ATCC 49558 / DSM 4304 / JCM 9628 / NBRC 100126 / VC-16).